The primary structure comprises 194 residues: Interferon alpha (194 aa).

The N-terminal stretch at 1–23 is a signal peptide; it reads MALPSSFLVALVALGCNSVCSLG. Intrachain disulfides connect Cys-24-Cys-123 and Cys-52-Cys-166. Asn-102 carries an N-linked (GlcNAc...) asparagine glycan.

The protein belongs to the alpha/beta interferon family.

The protein localises to the secreted. Produced by macrophages, IFN-alpha have antiviral activities. Interferon stimulates the production of two enzymes: a protein kinase and an oligoadenylate synthetase. The chain is Interferon alpha from Felis catus (Cat).